Here is a 634-residue protein sequence, read N- to C-terminus: Probable potassium transport system protein Kup (634 aa).

The next 12 helical transmembrane spans lie at 21–41, 58–78, 110–130, 152–172, 179–199, 223–243, 258–278, 296–316, 348–368, 377–397, 403–423, and 427–447; these read LVIG…LYTL, VLGI…LKYV, MYVV…DGVI, PFVV…QRFG, AFGP…VYNM, WHAV…EALY, WQFV…ALML, ALYP…QALI, IYVP…VIGF, AYGV…IIYA, VPAP…CAFF, and IIKF…LFTL.

Belongs to the HAK/KUP transporter (TC 2.A.72) family.

It is found in the cell inner membrane. It catalyses the reaction K(+)(in) + H(+)(in) = K(+)(out) + H(+)(out). Its function is as follows. Transport of potassium into the cell. Likely operates as a K(+):H(+) symporter. The protein is Probable potassium transport system protein Kup of Xanthomonas euvesicatoria pv. vesicatoria (strain 85-10) (Xanthomonas campestris pv. vesicatoria).